The primary structure comprises 105 residues: Thioredoxin-like protein slr0233 (105 aa).

Residues 1-102 form the Thioredoxin domain; it reads MAVKKQFANF…QAAQLIQQLQ (102 aa). C30 and C33 form a disulfide bridge.

The protein belongs to the thioredoxin family.

This Synechocystis sp. (strain ATCC 27184 / PCC 6803 / Kazusa) protein is Thioredoxin-like protein slr0233.